Reading from the N-terminus, the 256-residue chain is PHD finger protein ALFIN-LIKE 6 (256 aa).

The segment at 144 to 200 is disordered; the sequence is SKDLSVNNNNSKSKPSGVKSRQSESLSKVAKMSSPPPKEEEEEEDESEDESEDDEQG. Positions 146-163 are enriched in low complexity; it reads DLSVNNNNSKSKPSGVKS. Over residues 182–199 the composition is skewed to acidic residues; sequence EEEEEEDESEDESEDDEQ. The segment at 200–252 adopts a PHD-type zinc-finger fold; that stretch reads GAVCGACGDNYGTDEFWICCDACEKWFHGKCVKITPAKAEHIKHYKCPTCSNK.

The protein belongs to the Alfin family. In terms of assembly, interacts with H3K4me3 and to a lesser extent with H3K4me2. Ubiquitously expressed.

It is found in the nucleus. Functionally, histone-binding component that specifically recognizes H3 tails trimethylated on 'Lys-4' (H3K4me3), which mark transcription start sites of virtually all active genes. This is PHD finger protein ALFIN-LIKE 6 (AL6) from Arabidopsis thaliana (Mouse-ear cress).